Consider the following 84-residue polypeptide: Small ribosomal subunit protein bS20 (84 aa).

Basic residues predominate over residues Lys62–Ala72. A disordered region spans residues Lys62 to Arg84. The span at Trp75–Arg84 shows a compositional bias: polar residues.

This sequence belongs to the bacterial ribosomal protein bS20 family.

Functionally, binds directly to 16S ribosomal RNA. In Mycoplasmoides gallisepticum (strain R(low / passage 15 / clone 2)) (Mycoplasma gallisepticum), this protein is Small ribosomal subunit protein bS20.